Reading from the N-terminus, the 493-residue chain is Cytochrome c-552 (493 aa).

The N-terminal stretch at 1-25 is a signal peptide; sequence MEKKLKSWQGWLLFCGAMAVVFVLG. His116 is a heme c binding site. 3 residues coordinate heme: Cys144, Cys147, and Lys148. Residues Cys182, Cys185, His186, Cys224, Cys227, and His228 each coordinate heme c. 4 residues coordinate Ca(2+): Glu230, Tyr231, Lys276, and Gln278. Tyr231 provides a ligand contact to substrate. Residue His279 participates in substrate binding. Residues His290, Cys297, Cys300, His301, His315, Cys328, Cys331, His332, and His407 each coordinate heme c.

Belongs to the cytochrome c-552 family. Ca(2+) serves as cofactor. It depends on heme c as a cofactor.

It is found in the periplasm. It catalyses the reaction 6 Fe(III)-[cytochrome c] + NH4(+) + 2 H2O = 6 Fe(II)-[cytochrome c] + nitrite + 8 H(+). The protein operates within nitrogen metabolism; nitrate reduction (assimilation). Functionally, catalyzes the reduction of nitrite to ammonia, consuming six electrons in the process. This is Cytochrome c-552 from Bacteroides fragilis (strain ATCC 25285 / DSM 2151 / CCUG 4856 / JCM 11019 / LMG 10263 / NCTC 9343 / Onslow / VPI 2553 / EN-2).